The sequence spans 149 residues: General odorant-binding protein 57c (149 aa).

An N-terminal signal peptide occupies residues 1-16 (MLKLWLICILTVSVVS). Cystine bridges form between C32-C70, C66-C117, and C106-C126.

This sequence belongs to the PBP/GOBP family.

In terms of biological role, present in the aqueous fluid surrounding olfactory sensory dendrites and are thought to aid in the capture and transport of hydrophobic odorants into and through this fluid. In Drosophila melanogaster (Fruit fly), this protein is General odorant-binding protein 57c.